We begin with the raw amino-acid sequence, 953 residues long: Coatomer subunit beta (953 aa).

Thr2 carries the N-acetylthreonine modification. HEAT repeat units follow at residues 96–131 (HEMILVCDAYRKDLQHPNEFIRGSTLRFLCKLKEAE), 132–168 (LLEPLMPAIRACLEHRHSYVRRNAVLAIYTIYRNFEN), 240–276 (SERARFIRCIYNLLQSSSPAVKYEAAGTLVTLSSAPT), 277–314 (AIKAAAQCYIDLIIKESDNNVKLIVLDRLVELKEHPAH), 316–353 (RVLQDLVMDILRVLSTPDLEVRKKTLQLALDLVSSRNV), and 396–433 (DMAANVIPVLMEFLSDSNEAAAADVLEFVREAIQRFDN). Lys494 bears the N6-acetyllysine mark.

In terms of assembly, oligomeric complex that consists of at least the alpha, beta, beta', gamma, delta, epsilon and zeta subunits. Interacts with SCYL1. Interacts with CAPN8. Interacts with COPG1. Interacts with ARF1 (myristoylated); this interaction is required for binding of COPB1 to Golgi membranes. Interacts (via trunk domain) with ARF1 (via switch I region); the interaction is direct. Interacts with KCNK2 (via N-terminus); this interaction increases the channel-mediated whole cell currents and promotes plasma membrane expression of KCNK2. Interacts with PRKCE. Interacts with STX17. Interacts with TMEM115. Interacts with TMEM41B. In terms of processing, proteolytically cleaved between Ser-528 and Ser-529 by CAPN8.

The protein resides in the cytoplasm. The protein localises to the golgi apparatus membrane. Its subcellular location is the cytoplasmic vesicle. It is found in the COPI-coated vesicle membrane. It localises to the cell membrane. The protein resides in the endoplasmic reticulum-Golgi intermediate compartment. The protein localises to the microsome membrane. The coatomer is a cytosolic protein complex that binds to dilysine motifs and reversibly associates with Golgi non-clathrin-coated vesicles, which further mediate biosynthetic protein transport from the ER, via the Golgi up to the trans Golgi network. Coatomer complex is required for budding from Golgi membranes, and is essential for the retrograde Golgi-to-ER transport of dilysine-tagged proteins. In mammals, the coatomer can only be recruited by membranes associated to ADP-ribosylation factors (ARFs), which are small GTP-binding proteins; the complex also influences the Golgi structural integrity, as well as the processing, activity, and endocytic recycling of LDL receptors. Involved in the Golgi disassembly and reassembly processes during cell cycle. Involved in autophagy by playing a role in early endosome function. Plays a role in organellar compartmentalization of secretory compartments including endoplasmic reticulum (ER)-Golgi intermediate compartment (ERGIC), Golgi, trans-Golgi network (TGN) and recycling endosomes, and in biosynthetic transport of CAV1. Plays a functional role in facilitating the transport of kappa-type opioid receptor mRNAs into axons and enhances translation of these proteins in the axonal compartment of dorsal root ganglion (DRG) cells. Required for limiting lipid storage in lipid droplets. Involved in lipid homeostasis by regulating the presence of perilipin family members PLIN2 and PLIN3 at the lipid droplet surface and promoting the association of adipocyte triglyceride lipase (PNPLA2) with the lipid droplet surface to mediate lipolysis. The chain is Coatomer subunit beta (Copb1) from Rattus norvegicus (Rat).